The primary structure comprises 83 residues: Beta-defensin 19 (83 aa).

The signal sequence occupies residues 1 to 19 (MRLALLLLAILVATELVVS). Cystine bridges form between Cys27–Cys54, Cys34–Cys48, and Cys38–Cys55.

Belongs to the beta-defensin family. Specifically expressed in male gonads (Sertoli cells).

The protein localises to the secreted. Its function is as follows. Has antibacterial activity. The polypeptide is Beta-defensin 19 (Defb19) (Mus musculus (Mouse)).